Here is a 1377-residue protein sequence, read N- to C-terminus: DNA-directed RNA polymerase subunit beta' (1377 aa).

Zn(2+) is bound by residues cysteine 60, cysteine 62, cysteine 75, and cysteine 78. Aspartate 449, aspartate 451, and aspartate 453 together coordinate Mg(2+). 4 residues coordinate Zn(2+): cysteine 777, cysteine 851, cysteine 858, and cysteine 861.

It belongs to the RNA polymerase beta' chain family. The RNAP catalytic core consists of 2 alpha, 1 beta, 1 beta' and 1 omega subunit. When a sigma factor is associated with the core the holoenzyme is formed, which can initiate transcription. It depends on Mg(2+) as a cofactor. Requires Zn(2+) as cofactor.

The enzyme catalyses RNA(n) + a ribonucleoside 5'-triphosphate = RNA(n+1) + diphosphate. Functionally, DNA-dependent RNA polymerase catalyzes the transcription of DNA into RNA using the four ribonucleoside triphosphates as substrates. The polypeptide is DNA-directed RNA polymerase subunit beta' (Borreliella burgdorferi (strain ATCC 35210 / DSM 4680 / CIP 102532 / B31) (Borrelia burgdorferi)).